The following is a 2267-amino-acid chain: Acetyl-CoA carboxylase 1 (2267 aa).

A Biotin carboxylation domain is found at 38–544; the sequence is PIHSVLVANN…HTGWLDSRIA (507 aa). The ATP-grasp domain maps to 190-384; that stretch reads PESCNSIPEE…AAQVVVGMGV (195 aa). 216–273 contributes to the ATP binding site; sequence CQVVGYPAMIKASWGGGGKGIRKVHNDDEVRALFKQVQGEVPGSPIFIMKVASQSRHL. Residues Glu339, Glu353, and Asn355 each contribute to the Mg(2+) site. Mn(2+) is bound by residues Glu339, Glu353, and Asn355. Arg357 is a catalytic residue. The region spanning 671 to 745 is the Biotinyl-binding domain; it reads LQKEHDPSKL…QAADLIARLD (75 aa). Residue Lys712 is modified to N6-biotinyllysine. One can recognise a CoA carboxyltransferase N-terminal domain in the interval 1502-1843; sequence PYKPLDAIDL…YVGGPLPIMK (342 aa). Positions 1502 to 2163 are carboxyltransferase; it reads PYKPLDAIDL…EDALAKEIRE (662 aa). The CoA site is built by Arg1752, Lys2053, and Arg2055. One can recognise a CoA carboxyltransferase C-terminal domain in the interval 1847 to 2163; that stretch reads PPDRPVTYFP…EDALAKEIRE (317 aa).

As to quaternary structure, homodimer. Mg(2+) serves as cofactor. The cofactor is Mn(2+). It depends on biotin as a cofactor.

The protein resides in the cytoplasm. It localises to the cytosol. It catalyses the reaction hydrogencarbonate + acetyl-CoA + ATP = malonyl-CoA + ADP + phosphate + H(+). It carries out the reaction N(6)-biotinyl-L-lysyl-[protein] + hydrogencarbonate + ATP = N(6)-carboxybiotinyl-L-lysyl-[protein] + ADP + phosphate + H(+). Its pathway is lipid metabolism; malonyl-CoA biosynthesis; malonyl-CoA from acetyl-CoA: step 1/1. In terms of biological role, multifunctional enzyme that catalyzes the carboxylation of acetyl-CoA, forming malonyl-CoA, which is used in the plastid for fatty acid synthesis and in the cytosol in various biosynthetic pathways including fatty acid elongation. This chain is Acetyl-CoA carboxylase 1 (ACC1), found in Oryza sativa subsp. japonica (Rice).